Reading from the N-terminus, the 436-residue chain is uncharacterized protein (436 aa).

A signal peptide spans methionine 1–alanine 18.

This is an uncharacterized protein from Aquifex aeolicus (strain VF5).